The chain runs to 417 residues: Lipoyl synthase, mitochondrial (417 aa).

Residues 35 to 56 (EANPTDLAGLKRKAKRRPTKLA) are disordered. Residues 44–53 (LKRKAKRRPT) show a composition bias toward basic residues. [4Fe-4S] cluster is bound by residues cysteine 122, cysteine 127, cysteine 133, cysteine 152, cysteine 156, cysteine 159, and serine 367. Residues 137–356 (KKSEATATIM…RDKALEMGFL (220 aa)) form the Radical SAM core domain. The interval 389–417 (IEEQQHDKENNNLLLSKEDEKTTQEKANF) is disordered. The span at 391-417 (EQQHDKENNNLLLSKEDEKTTQEKANF) shows a compositional bias: basic and acidic residues.

The protein belongs to the radical SAM superfamily. Lipoyl synthase family. Requires [4Fe-4S] cluster as cofactor.

Its subcellular location is the mitochondrion. It carries out the reaction [[Fe-S] cluster scaffold protein carrying a second [4Fe-4S](2+) cluster] + N(6)-octanoyl-L-lysyl-[protein] + 2 oxidized [2Fe-2S]-[ferredoxin] + 2 S-adenosyl-L-methionine + 4 H(+) = [[Fe-S] cluster scaffold protein] + N(6)-[(R)-dihydrolipoyl]-L-lysyl-[protein] + 4 Fe(3+) + 2 hydrogen sulfide + 2 5'-deoxyadenosine + 2 L-methionine + 2 reduced [2Fe-2S]-[ferredoxin]. It participates in protein modification; protein lipoylation via endogenous pathway; protein N(6)-(lipoyl)lysine from octanoyl-[acyl-carrier-protein]: step 2/2. In terms of biological role, catalyzes the radical-mediated insertion of two sulfur atoms into the C-6 and C-8 positions of the octanoyl moiety bound to the lipoyl domains of lipoate-dependent enzymes, thereby converting the octanoylated domains into lipoylated derivatives. In Komagataella phaffii (strain GS115 / ATCC 20864) (Yeast), this protein is Lipoyl synthase, mitochondrial.